Here is a 274-residue protein sequence, read N- to C-terminus: MNKKLKVLLTNDDGIFAKGISLLVSNLLKADFADLYIVAPNTEQSGKSMSFSYTEPVSIERVDYHQPVAGAWAVSGSPVDCIKLALGDLFLDSLPDIVLSGINNGSNAGRNIFYSGTAGAAMEAVISGIPAIAFSQEEHISCFQEKKSCELIKMLVLYALSRPFPLLTGFNVNFPACENNEEWQGMKLVATGKEFAYGVPRLLCDDGKRKFYSLNDCQRLMDEDLSEECHSLLTKKITVAPLLVRNSPLGLMSEEEFQQLQQEFEDFIHSEIRS.

4 residues coordinate a divalent metal cation: Asp-12, Asp-13, Ser-45, and Asn-103.

Belongs to the SurE nucleotidase family. It depends on a divalent metal cation as a cofactor.

The protein localises to the cytoplasm. It catalyses the reaction a ribonucleoside 5'-phosphate + H2O = a ribonucleoside + phosphate. Its function is as follows. Nucleotidase that shows phosphatase activity on nucleoside 5'-monophosphates. In Chlamydia felis (strain Fe/C-56) (Chlamydophila felis), this protein is 5'-nucleotidase SurE.